A 151-amino-acid chain; its full sequence is MGRMHAPGKGISQSALPYRRSVPTWLKLTADDVKEQIFKLGKKGLTPSQIGVKLRDSHGVVQVRFVTGKKILRIMKAMGLAPDLPEDLYYLIKKAVAMRKHLERNRKDKDSKFRLILVESRIHRLARYYKTKSVLPPNWKYESSTASALVA.

Belongs to the universal ribosomal protein uS15 family.

The polypeptide is Small ribosomal subunit protein uS15 (RpS13) (Choristoneura parallela (Spotted fireworm moth)).